A 358-amino-acid polypeptide reads, in one-letter code: MSSPAIGQPPIPPTPTDANISGKTVIVTGGNSGLGYEAARQFLTLGASRMILACRSIARGQEAASALRAHPTVKETNPNAVIDAFELDLDDYYSGLCFSNRVNAEVKELDILLNNGGQVVMGYEKSKSGHERSMQVNCYTHLLISLELFPLLRSTSAARGVPSRITFTGSATQIMQNTLSKQPISSESTVLGHFDDEANFNKLYRYADSKTVVNAYVRRLAALAPSEVIVNNACPGLVQTGIDKNLPFYLKLPMGLLRKSTGRTVEEGARTLIYVAVVAGTETNGKFLQHNQVDPLASTYTFAFPCYMERRPPECFSVSLEHGSKAQESLLAWNTSILRSFHGGGSAWRNTFNLALTI.

A disordered region spans residues 1 to 22 (MSSPAIGQPPIPPTPTDANISG). 7 residues coordinate NADP(+): L34, D88, N115, Y206, K210, V238, and T240. Residue Y206 is the Proton donor of the active site. Residue K210 is the Lowers pKa of active site Tyr of the active site.

The protein belongs to the short-chain dehydrogenases/reductases (SDR) family.

It participates in secondary metabolite biosynthesis. Short chain dehydrogenase; part of the SOR gene cluster that mediates the biosynthesis of sorbicillinoids, a diverse group of yellow secondary metabolites that restrict growth of competing pathogenic fungi but not of bacteria. Sorbicillinoids biosynthesis requires the action of two PKSs. The SOR cluster is required for the production of trichodimerol and dihydrotrichotetronin, with sor2 being sufficient for production of trichodimerol, but not dihydrotrichotetronin in the light. Sor1 iteratively combines three acetyl units and the growing chain is modified by the ketoacyl reductase subunit, and optional by the enoyl reductase subunit in the second cycle. The polyketide is then handed over to the PKS sor2, which adds three more acetyl units, and two methyl groups. Sor2 releases an aldehyde, which undergoes spontaneous cyclization resulting in the formation of sorbicillin or 2',3'-dihydrosorbicillin. The monooxygenase sor5 oxidizes sorbicillin and 2',3'-dihydrosorbicillin to 2',3'-dihydrosorbicillinol and sorbicillinol, respectively. The oxidoreductase sor8 further converts sorbicillinol into oxosorbicillinol. Sorbicillinol is the building block for the other sorbicillinoids such as disorbicillinol, bisvertinolon, dihydrobisvertinolone, and dihydrotrichotetronine. The protein is Short chain dehydrogenase sor7 of Hypocrea jecorina (strain QM6a) (Trichoderma reesei).